The following is a 240-amino-acid chain: Large ribosomal subunit protein bL25 (240 aa).

A disordered region spans residues 1 to 24; the sequence is MATVMEFKATARPKSGKGAARAER.

Belongs to the bacterial ribosomal protein bL25 family. CTC subfamily. As to quaternary structure, part of the 50S ribosomal subunit; part of the 5S rRNA/L5/L18/L25 subcomplex. Contacts the 5S rRNA. Binds to the 5S rRNA independently of L5 and L18.

This is one of the proteins that binds to the 5S RNA in the ribosome where it forms part of the central protuberance. The chain is Large ribosomal subunit protein bL25 from Rhodopseudomonas palustris (strain HaA2).